A 352-amino-acid chain; its full sequence is Probable dual-specificity RNA methyltransferase RlmN (352 aa).

Glu93 acts as the Proton acceptor in catalysis. One can recognise a Radical SAM core domain in the interval 99 to 332 (TAKRLTVCVS…ATVRQTRGLD (234 aa)). Cys106 and Cys337 are joined by a disulfide. Cys113, Cys117, and Cys120 together coordinate [4Fe-4S] cluster. Residues 160 to 161 (GE), Ser190, 213 to 215 (SLH), and Asn294 contribute to the S-adenosyl-L-methionine site. Cys337 (S-methylcysteine intermediate) is an active-site residue.

It belongs to the radical SAM superfamily. RlmN family. Requires [4Fe-4S] cluster as cofactor.

The protein localises to the cytoplasm. The enzyme catalyses adenosine(2503) in 23S rRNA + 2 reduced [2Fe-2S]-[ferredoxin] + 2 S-adenosyl-L-methionine = 2-methyladenosine(2503) in 23S rRNA + 5'-deoxyadenosine + L-methionine + 2 oxidized [2Fe-2S]-[ferredoxin] + S-adenosyl-L-homocysteine. It carries out the reaction adenosine(37) in tRNA + 2 reduced [2Fe-2S]-[ferredoxin] + 2 S-adenosyl-L-methionine = 2-methyladenosine(37) in tRNA + 5'-deoxyadenosine + L-methionine + 2 oxidized [2Fe-2S]-[ferredoxin] + S-adenosyl-L-homocysteine. Functionally, specifically methylates position 2 of adenine 2503 in 23S rRNA and position 2 of adenine 37 in tRNAs. The polypeptide is Probable dual-specificity RNA methyltransferase RlmN (Synechococcus sp. (strain JA-2-3B'a(2-13)) (Cyanobacteria bacterium Yellowstone B-Prime)).